The sequence spans 350 residues: Small ribosomal subunit biogenesis GTPase RsgA (350 aa).

The span at 1–17 (MSKNKLSKGQQRRVNAN) shows a compositional bias: polar residues. The disordered stretch occupies residues 1–27 (MSKNKLSKGQQRRVNANHQRRLKTSAE). Residues 104–273 (TSVLTRPDFY…VIDSPGVREF (170 aa)) enclose the CP-type G domain. Residues 160–163 (NKID) and 214–222 (GQSGVGKSS) each bind GTP. Positions 297, 302, 304, and 310 each coordinate Zn(2+).

This sequence belongs to the TRAFAC class YlqF/YawG GTPase family. RsgA subfamily. As to quaternary structure, monomer. Associates with 30S ribosomal subunit, binds 16S rRNA. Requires Zn(2+) as cofactor.

It localises to the cytoplasm. Its function is as follows. One of several proteins that assist in the late maturation steps of the functional core of the 30S ribosomal subunit. Helps release RbfA from mature subunits. May play a role in the assembly of ribosomal proteins into the subunit. Circularly permuted GTPase that catalyzes slow GTP hydrolysis, GTPase activity is stimulated by the 30S ribosomal subunit. The protein is Small ribosomal subunit biogenesis GTPase RsgA of Salmonella agona (strain SL483).